Consider the following 211-residue polypeptide: Ribosomal RNA small subunit methyltransferase G (211 aa).

S-adenosyl-L-methionine contacts are provided by residues glycine 81, leucine 86, 132 to 133, and arginine 147; that span reads VE.

It belongs to the methyltransferase superfamily. RNA methyltransferase RsmG family.

Its subcellular location is the cytoplasm. The enzyme catalyses guanosine(527) in 16S rRNA + S-adenosyl-L-methionine = N(7)-methylguanosine(527) in 16S rRNA + S-adenosyl-L-homocysteine. Functionally, specifically methylates the N7 position of guanine in position 527 of 16S rRNA. This is Ribosomal RNA small subunit methyltransferase G from Actinobacillus succinogenes (strain ATCC 55618 / DSM 22257 / CCUG 43843 / 130Z).